We begin with the raw amino-acid sequence, 371 residues long: Protein NDRG2 (371 aa).

The interval methionine 1–glutamate 22 is disordered. At alanine 2 the chain carries N-acetylalanine. Threonine 20 is subject to Phosphothreonine. A phosphoserine mark is found at serine 326 and serine 328. A Phosphothreonine; by SGK1 modification is found at threonine 330. Serine 332 is modified (phosphoserine; by PKC/PRKCQ or SGK1). Threonine 334 is subject to Phosphothreonine. Residues threonine 334–cysteine 371 form a disordered region. Phosphoserine occurs at positions 335, 338, and 344. Residue threonine 348 is modified to Phosphothreonine; by PKB/AKT1 or SGK1. Phosphoserine is present on residues serine 350, serine 352, serine 353, and serine 355. A Phosphothreonine modification is found at threonine 357. Position 370 is a phosphoserine (serine 370).

Belongs to the NDRG family. Interacts with CTNNB1. Expressed at highest levels in brain, heart and liver, and at lower levels in kidney, colon, skeletal muscle, adrenal gland, ovary and uterus (at protein level).

It is found in the cytoplasm. It localises to the perinuclear region. Its subcellular location is the cell projection. The protein resides in the growth cone. Functionally, contributes to the regulation of the Wnt signaling pathway. Down-regulates CTNNB1-mediated transcriptional activation of target genes, such as CCND1, and may thereby act as tumor suppressor. May be involved in dendritic cell and neuron differentiation. This Mus musculus (Mouse) protein is Protein NDRG2 (Ndrg2).